A 247-amino-acid polypeptide reads, in one-letter code: Carboxy-S-adenosyl-L-methionine synthase (247 aa).

S-adenosyl-L-methionine contacts are provided by residues Tyr-39, 64–66, 89–90, 117–118, Asn-132, and Arg-199; these read GCS, DN, and DI.

This sequence belongs to the class I-like SAM-binding methyltransferase superfamily. Cx-SAM synthase family. In terms of assembly, homodimer.

It carries out the reaction prephenate + S-adenosyl-L-methionine = carboxy-S-adenosyl-L-methionine + 3-phenylpyruvate + H2O. Catalyzes the conversion of S-adenosyl-L-methionine (SAM) to carboxy-S-adenosyl-L-methionine (Cx-SAM). This is Carboxy-S-adenosyl-L-methionine synthase from Salmonella paratyphi B (strain ATCC BAA-1250 / SPB7).